The following is a 484-amino-acid chain: Suppressor of fused homolog (484 aa).

Residues Met-1–Pro-24 are disordered. Residues Pro-12–Pro-23 show a composition bias toward pro residues. Lys-257 participates in a covalent cross-link: Glycyl lysine isopeptide (Lys-Gly) (interchain with G-Cter in ubiquitin). The segment at Ser-279–Leu-360 is disordered. Ser-301 is subject to Phosphoserine. Lys-303 is modified (N6-acetyllysine). Lys-321 participates in a covalent cross-link: Glycyl lysine isopeptide (Lys-Gly) (interchain with G-Cter in SUMO2). The segment covering Ala-336–Leu-347 has biased composition (basic and acidic residues). Phosphoserine is present on residues Ser-342, Ser-346, and Ser-352. Residue Thr-353 is modified to Phosphothreonine. Residue Ser-481 is modified to Phosphoserine.

This sequence belongs to the SUFU family. May form homodimers. Part of a DNA-bound corepressor complex containing SAP18, GLI1 and SIN3. Part of a complex containing CTNNB1. Binds BTRC, GLI2, GLI3, SAP18 and STK36. Binds both free and DNA-bound GLI1. Interacts with KIF7. Interacts with GLI3FL and this interaction regulates the formation of either repressor or activator forms of GLI3. Its association with GLI3FL is regulated by Hh signaling and dissociation of the SUFU-GLI3 interaction requires the presence of the ciliary motor KIF3A. Interacts with ULK3; inactivating the protein kinase activity of ULK3. Interacts with RAB23. In terms of processing, polyubiquitinated at Lys-257 by the SCF(FBXL17) complex, leading to its subsequent degradation and allowing the release of GLI1 for proper hedgehog/smoothened signal transduction. Ubiquitination is impaired by phosphorylation at Ser-342, Ser-346, Ser-352 and Thr-353. Post-translationally, phosphorylation at Ser-342, Ser-346, Ser-352 and Thr-353 prevents ubiquitination by the SCF(FBXL17) complex. As to expression, ubiquitous in adult tissues. Detected in osteoblasts of the perichondrium in the developing limb of 12-week old embryos. Isoform 1 is detected in fetal brain, lung, kidney and testis. Isoform 2 is detected in fetal testis, and at much lower levels in fetal brain, lung and kidney.

It is found in the cytoplasm. Its subcellular location is the nucleus. Negative regulator in the hedgehog/smoothened signaling pathway. Down-regulates GLI1-mediated transactivation of target genes. Down-regulates GLI2-mediated transactivation of target genes. Part of a corepressor complex that acts on DNA-bound GLI1. May also act by linking GLI1 to BTRC and thereby targeting GLI1 to degradation by the proteasome. Sequesters GLI1, GLI2 and GLI3 in the cytoplasm, this effect is overcome by binding of STK36 to both SUFU and a GLI protein. Negative regulator of beta-catenin signaling. Regulates the formation of either the repressor form (GLI3R) or the activator form (GLI3A) of the full-length form of GLI3 (GLI3FL). GLI3FL is complexed with SUFU in the cytoplasm and is maintained in a neutral state. Without the Hh signal, the SUFU-GLI3 complex is recruited to cilia, leading to the efficient processing of GLI3FL into GLI3R. When Hh signaling is initiated, SUFU dissociates from GLI3FL and the latter translocates to the nucleus, where it is phosphorylated, destabilized, and converted to a transcriptional activator (GLI3A). Required for normal embryonic development. Required for the proper formation of hair follicles and the control of epidermal differentiation. The chain is Suppressor of fused homolog from Homo sapiens (Human).